The chain runs to 158 residues: SsrA-binding protein (158 aa).

The segment at 131 to 158 is disordered; that stretch reads GKKTHDKRETEKKRDWNREKARLLRDRG. Positions 136-158 are enriched in basic and acidic residues; sequence DKRETEKKRDWNREKARLLRDRG.

This sequence belongs to the SmpB family.

It is found in the cytoplasm. Its function is as follows. Required for rescue of stalled ribosomes mediated by trans-translation. Binds to transfer-messenger RNA (tmRNA), required for stable association of tmRNA with ribosomes. tmRNA and SmpB together mimic tRNA shape, replacing the anticodon stem-loop with SmpB. tmRNA is encoded by the ssrA gene; the 2 termini fold to resemble tRNA(Ala) and it encodes a 'tag peptide', a short internal open reading frame. During trans-translation Ala-aminoacylated tmRNA acts like a tRNA, entering the A-site of stalled ribosomes, displacing the stalled mRNA. The ribosome then switches to translate the ORF on the tmRNA; the nascent peptide is terminated with the 'tag peptide' encoded by the tmRNA and targeted for degradation. The ribosome is freed to recommence translation, which seems to be the essential function of trans-translation. This chain is SsrA-binding protein, found in Brucella ovis (strain ATCC 25840 / 63/290 / NCTC 10512).